Consider the following 240-residue polypeptide: 2-C-methyl-D-erythritol 2,4-cyclodiphosphate synthase, apicoplast (240 aa).

Positions 71 and 73 each coordinate a divalent metal cation. Residues 71–73 and 115–116 each bind 4-CDP-2-C-methyl-D-erythritol 2-phosphate; these read DIH and HS. His123 provides a ligand contact to a divalent metal cation. 4-CDP-2-C-methyl-D-erythritol 2-phosphate contacts are provided by residues 137–139, 142–146, 181–187, and 212–214; these read DIG, FPDKD, AQVPKIS, and GKT.

Belongs to the IspF family. In terms of assembly, homotrimer. A divalent metal cation is required as a cofactor.

It localises to the plastid. It is found in the apicoplast. It catalyses the reaction 4-CDP-2-C-methyl-D-erythritol 2-phosphate = 2-C-methyl-D-erythritol 2,4-cyclic diphosphate + CMP. The protein operates within isoprenoid biosynthesis; isopentenyl diphosphate biosynthesis via DXP pathway; isopentenyl diphosphate from 1-deoxy-D-xylulose 5-phosphate: step 4/6. In the mevalonate-independent isoprenoid biosynthetic pathway, converts 4-diphosphocytidyl-2C-methyl-D-erythritol 2-phosphate into 2C-methyl-D-erythritol 2,4-cyclodiphosphate and CMP. The polypeptide is 2-C-methyl-D-erythritol 2,4-cyclodiphosphate synthase, apicoplast (Plasmodium falciparum (isolate 3D7)).